Reading from the N-terminus, the 1044-residue chain is Translation initiation factor IF-2 (1044 aa).

The segment at 55-458 (EAQEGQGAGK…KRKASAQERR (404 aa)) is disordered. Residues 57–77 (QEGQGAGKSAAKSAKPAAQPK) show a composition bias toward low complexity. Residues 104-146 (LSEKRERRPLTERRPLAERRPLAERPLVDRPVTERPLAERPAA) are compositionally biased toward basic and acidic residues. Composition is skewed to low complexity over residues 147–168 (ELRP…AQPV), 190–231 (KAQP…QKPA), and 254–265 (ASSRPASAAPAA). Basic and acidic residues predominate over residues 267–281 (GEKRPAAAAERREEP). Low complexity-rich tracts occupy residues 352-375 (AAGQ…AGAP) and 383-395 (APQR…APLA). Residues 399 to 444 (LDPKVAEQAKAGEGKPRYGQSGDKRRADLYDRREHPSSQPSEEKLF) are compositionally biased toward basic and acidic residues. The tr-type G domain maps to 546–714 (PRHPVVTIMG…ILVLAEVSDL (169 aa)). The interval 555-562 (GHVDHGKT) is G1. Residue 555-562 (GHVDHGKT) participates in GTP binding. The tract at residues 580–584 (GITQH) is G2. The segment at 601-604 (DTPG) is G3. Residues 601-605 (DTPGH) and 655-658 (NKID) each bind GTP. Residues 655-658 (NKID) are G4. The G5 stretch occupies residues 691 to 693 (SAK).

It belongs to the TRAFAC class translation factor GTPase superfamily. Classic translation factor GTPase family. IF-2 subfamily.

It is found in the cytoplasm. One of the essential components for the initiation of protein synthesis. Protects formylmethionyl-tRNA from spontaneous hydrolysis and promotes its binding to the 30S ribosomal subunits. Also involved in the hydrolysis of GTP during the formation of the 70S ribosomal complex. This is Translation initiation factor IF-2 from Symbiobacterium thermophilum (strain DSM 24528 / JCM 14929 / IAM 14863 / T).